Here is a 1021-residue protein sequence, read N- to C-terminus: Spindle assembly checkpoint serine/threonine-protein kinase BUB1 (1021 aa).

The segment at 1 to 35 (MNLDLGSTVRGYESDKDTFPQSKGVSSSQKEQHSQ) is disordered. The segment covering 19–35 (FPQSKGVSSSQKEQHSQ) has biased composition (polar residues). One can recognise a BUB1 N-terminal domain in the interval 47–212 (LLNDLEDMDD…VPDSRERLKG (166 aa)). The interval 289–359 (NKKTSIYADQ…QRRGKKHTED (71 aa)) is interaction with BUB3. Disordered stretches follow at residues 351 to 370 (RRGK…KKRK), 398 to 420 (FKDD…VQTT), 511 to 545 (VKDP…RPEK), and 567 to 600 (PKEQ…PFLT). The segment covering 517-528 (ETVSQQTTSTNE) has biased composition (polar residues). Over residues 569 to 580 (EQIRTEDKKSGD) the composition is skewed to basic and acidic residues. Residues 582–596 (TETQTQLTSTTIQSS) are compositionally biased toward low complexity. A Protein kinase domain is found at 705–1021 (YCIRGELGEG…QYKGKPSRRF (317 aa)). 3 residues coordinate ATP: glycine 715, tyrosine 716, and alanine 717. Aspartate 833 serves as the catalytic Proton acceptor. Residues aspartate 837, asparagine 838, and aspartate 871 each contribute to the ATP site.

It belongs to the protein kinase superfamily. Ser/Thr protein kinase family. BUB1 subfamily. As to quaternary structure, part of complex consisting of MAD1, BUB1 and BUB3 after activation of spindle checkpoint. Part of the BUB1-BUB3 complex, composed of BUB1 and BUB3. Interacts with SPC105 (via phosphorylated MELT motifs); the interaction occurs when part of the BUB1-BUB3 complex. Interacts with SKP1; the interaction is direct. Mg(2+) is required as a cofactor. In terms of processing, autophosphorylated.

It localises to the nucleus. It is found in the chromosome. The protein resides in the centromere. The protein localises to the kinetochore. It catalyses the reaction L-seryl-[protein] + ATP = O-phospho-L-seryl-[protein] + ADP + H(+). The enzyme catalyses L-threonyl-[protein] + ATP = O-phospho-L-threonyl-[protein] + ADP + H(+). Its function is as follows. Involved in mitotic spindle assembly checkpoint signaling, a process that delays anaphase until chromosomes are bioriented on the spindle, and in the repair of incorrect mitotic kinetochore-spindle microtubule attachments. The formation of a MAD1-BUB1-BUB3 complex seems to be required for the spindle checkpoint mechanism. Phosphorylates BUB3. Also autophosphorylates. Associates with centromere (CEN) DNA via interaction with SKP1. The association with SKP1 is required for the mitotic delay induced by kinetochore tension defects, but not for the arrest induced by spindle depolymerization or kinetochore assembly defects. The polypeptide is Spindle assembly checkpoint serine/threonine-protein kinase BUB1 (BUB1) (Saccharomyces cerevisiae (strain ATCC 204508 / S288c) (Baker's yeast)).